A 971-amino-acid chain; its full sequence is Nuclear factor NF-kappa-B p110 subunit (971 aa).

A compositionally biased stretch (low complexity) spans 23 to 41; that stretch reads STSGYSSSTSPNSTNRSFS. The interval 23 to 46 is disordered; sequence STSGYSSSTSPNSTNRSFSPAHSP. In terms of domain architecture, RHD spans 147-339; that stretch reads KHVPQLRIVE…NAINNRKSAQ (193 aa). Phosphoserine; by PKA is present on serine 431. The Nuclear localization signal signature appears at 452-457; that stretch reads SRKRRR. Residues 453–496 form a disordered region; sequence RKRRRTGSSANSSSSGTESSNNSLDLPKTLGLAQPPNGLPNLSQ. Residues 460–475 are compositionally biased toward low complexity; that stretch reads SSANSSSSGTESSNNS. Residue threonine 620 is modified to Phosphothreonine. A Phosphotyrosine modification is found at tyrosine 626. 5 ANK repeats span residues 640 to 669, 673 to 702, 710 to 740, 745 to 775, and 783 to 812; these read DGDSALHVACQQDRAHYIRPLLGMGCNPNL, AGNTPLHVAVKEEHLSCVESFLNGVPTVQL, DGLTPLHMAIRQNKYDVAKKLISYDRTSISV, DGNNALHMAVLEQSVELLVLILDAQNENLTD, and AGHTPLELAERKANDRVVQLLKNVYPEKGE. The segment at 826-877 is disordered; it reads IDSSSDESSDAGQLEIKSEEMDIETKDEDSVELDLSSGPRRQKDESSRDTEM. Positions 866–877 are enriched in basic and acidic residues; sequence RQKDESSRDTEM. Serine 950 is subject to Phosphoserine.

As to quaternary structure, rel-p68 subunit interacts with Dredd. Interacts with DMAP1. Interacts with akirin; interaction is immune stimulation-dependent; activates selected rel target gene promoters. In terms of processing, phosphorylated by lipopolysaccharide (LPS)-activated I-kappa-B kinase complex before being cleaved. Rel-p110 subunit is cleaved within seconds of an immune challenge into Rel-p49 subunit and Rel-p68 subunit. Rel-p110 subunit reappears after 45 minutes.

It is found in the nucleus. The protein resides in the cytoplasm. Transcription factor that plays a key role in the humoral immune response as part of the peptidoglycan recognition protein (IMD) signaling pathway. Rel-p68 subunit translocates to the nucleus where it binds to the promoter of the Cecropin A1 gene and probably other antimicrobial peptide genes. I-kappa-B kinase complex (IKKbeta and key) and PGRP-LC are essential signaling components in transmitting the lipopolysaccharide (LPS) signal leading to cact degradation for NF-kappa-B (rel) activation. Part of a Toll-related receptor pathway that functions in the apoptosis of unfit cells during cell competition. Also part of some antiviral immunity: activated downstream of Sting signaling, which detects double-stranded RNA (dsRNA) from viruses, and promotes expression of antiviral effector genes. May be part of a NF-kappa-B and Tollo signaling cascade that regulates development of the peripheral nervous system. Possibly post-transcriptionally regulates the neuron-specific genes sc and ase, by promoting the rapid turnover of their transcripts in the wing imaginal disk. The polypeptide is Nuclear factor NF-kappa-B p110 subunit (Drosophila melanogaster (Fruit fly)).